The following is a 503-amino-acid chain: Inosine-5'-monophosphate dehydrogenase (503 aa).

K(+) contacts are provided by G20 and S22. 2 CBS domains span residues 103-163 (FVVS…ETKV) and 167-228 (MTPF…LVDS). 261–263 (DSS) contacts NAD(+). The K(+) site is built by D264, F266, G314, and G316. NAD(+) is bound at residue 312-314 (GIG). S317 contributes to the IMP binding site. K(+) is bound at residue C319. C319 acts as the Thioimidate intermediate in catalysis. Residues 358–360 (DGG), 381–382 (GR), and 405–409 (YWGEG) contribute to the IMP site. R418 (proton acceptor) is an active-site residue. E431 is a binding site for IMP. N460, E485, G486, and G487 together coordinate K(+).

It belongs to the IMPDH/GMPR family. In terms of assembly, homotetramer. Requires K(+) as cofactor.

The protein resides in the cytoplasm. The catalysed reaction is IMP + NAD(+) + H2O = XMP + NADH + H(+). The protein operates within purine metabolism; XMP biosynthesis via de novo pathway; XMP from IMP: step 1/1. With respect to regulation, mycophenolic acid (MPA) is a non-competitive inhibitor that prevents formation of the closed enzyme conformation by binding to the same site as the amobile flap. In contrast, mizoribine monophosphate (MZP) is a competitive inhibitor that induces the closed conformation. MPA is a potent inhibitor of mammalian IMPDHs but a poor inhibitor of the bacterial enzymes. MZP is a more potent inhibitor of bacterial IMPDH. Functionally, catalyzes the conversion of inosine 5'-phosphate (IMP) to xanthosine 5'-phosphate (XMP), the first committed and rate-limiting step in the de novo synthesis of guanine nucleotides, and therefore plays an important role in the regulation of cell growth. Could also have a single-stranded nucleic acid-binding activity and could play a role in RNA and/or DNA metabolism. In Tritrichomonas foetus (Trichomonas foetus), this protein is Inosine-5'-monophosphate dehydrogenase.